The sequence spans 159 residues: Ribosome maturation factor RimP (159 aa).

The protein belongs to the RimP family.

The protein localises to the cytoplasm. Required for maturation of 30S ribosomal subunits. The protein is Ribosome maturation factor RimP of Halothermothrix orenii (strain H 168 / OCM 544 / DSM 9562).